The primary structure comprises 621 residues: pH-response transcription factor pacc-1 (621 aa).

Positions 1-14 are enriched in polar residues; the sequence is MSSTPAQENGTVNG. The tract at residues 1–87 is disordered; that stretch reads MSSTPAQENG…PTTASNSSAP (87 aa). Low complexity predominate over residues 15-87; that stretch reads ANAAPAPAPA…PTTASNSSAP (73 aa). 3 consecutive C2H2-type zinc fingers follow at residues 95 to 120, 131 to 155, and 161 to 183; these read LVCR…CEKH, LTCQ…VRVH, and HKCD…VKTH. Disordered stretches follow at residues 395-539 and 566-621; these read PTYA…PETY and DEDD…PRIN. 2 stretches are compositionally biased toward low complexity: residues 409-423 and 436-465; these read ASLA…PHSA and SYTS…VSYP. The short motif at 464 to 467 is the YPX[LI] motif 1 element; sequence YPTL. Positions 476–486 are enriched in polar residues; the sequence is PSTSGLGSNFT. Positions 502-511 are enriched in basic and acidic residues; it reads RAADEADRAP. Residues 515 to 525 show a composition bias toward polar residues; sequence ASEQATVSSPS. The segment covering 583–595 has biased composition (low complexity); it reads RNQQQRNQQQQQQ. The YPX[LI] motif 2 motif lies at 614–617; it reads YPVL.

Belongs to the pacC/RIM101 family. As to quaternary structure, binds to DNA. Interacts with palA/prr-1, which binds to the two YPX[LI] motifs and is required for proteolytic processing. Post-translationally, activated by C-terminal proteolytic cleavage by signaling protease (probably palB/RIM13) at neutral to alkaline ambient pH.

Its subcellular location is the cytoplasm. It localises to the nucleus. Its function is as follows. Transcription factor that mediates regulation of both acid- and alkaline-expressed genes in response to ambient pH. At alkaline ambient pH, activates transcription of alkaline-expressed genes (including pacc-1 itself) and represses transcription of acid-expressed genes. The protein is pH-response transcription factor pacc-1 (pacc-1) of Neurospora crassa (strain ATCC 24698 / 74-OR23-1A / CBS 708.71 / DSM 1257 / FGSC 987).